Here is a 240-residue protein sequence, read N- to C-terminus: Probable septum site-determining protein MinC (240 aa).

It belongs to the MinC family. As to quaternary structure, interacts with MinD and FtsZ.

Its function is as follows. Cell division inhibitor that blocks the formation of polar Z ring septums. Rapidly oscillates between the poles of the cell to destabilize FtsZ filaments that have formed before they mature into polar Z rings. Prevents FtsZ polymerization. The chain is Probable septum site-determining protein MinC from Buchnera aphidicola subsp. Cinara cedri (strain Cc).